Here is a 706-residue protein sequence, read N- to C-terminus: DNA ligase (706 aa).

Residues D40–D44, S89–I90, and E120 contribute to the NAD(+) site. K122 (N6-AMP-lysine intermediate) is an active-site residue. Positions 143, 190, 306, and 330 each coordinate NAD(+). C424, C427, C442, and C447 together coordinate Zn(2+). In terms of domain architecture, BRCT spans E625–T706.

Belongs to the NAD-dependent DNA ligase family. LigA subfamily. Requires Mg(2+) as cofactor. Mn(2+) is required as a cofactor.

The enzyme catalyses NAD(+) + (deoxyribonucleotide)n-3'-hydroxyl + 5'-phospho-(deoxyribonucleotide)m = (deoxyribonucleotide)n+m + AMP + beta-nicotinamide D-nucleotide.. DNA ligase that catalyzes the formation of phosphodiester linkages between 5'-phosphoryl and 3'-hydroxyl groups in double-stranded DNA using NAD as a coenzyme and as the energy source for the reaction. It is essential for DNA replication and repair of damaged DNA. In Rhodopirellula baltica (strain DSM 10527 / NCIMB 13988 / SH1), this protein is DNA ligase.